Reading from the N-terminus, the 174-residue chain is Larval cuticle protein LCP-22 (174 aa).

The first 16 residues, methionine 1 to alanine 16, serve as a signal peptide directing secretion. In terms of domain architecture, Chitin-binding type R&amp;R spans aspartate 82 to proline 153.

In terms of biological role, component of the cuticle of the larva of Bombyx mori. This is Larval cuticle protein LCP-22 (LCP22) from Bombyx mori (Silk moth).